A 264-amino-acid chain; its full sequence is 3-methyl-2-oxobutanoate hydroxymethyltransferase (264 aa).

D45 and D84 together coordinate Mg(2+). 3-methyl-2-oxobutanoate contacts are provided by residues 45–46 (DS), D84, and K112. E114 contacts Mg(2+). The active-site Proton acceptor is E181.

This sequence belongs to the PanB family. As to quaternary structure, homodecamer; pentamer of dimers. Mg(2+) is required as a cofactor.

It is found in the cytoplasm. It catalyses the reaction 3-methyl-2-oxobutanoate + (6R)-5,10-methylene-5,6,7,8-tetrahydrofolate + H2O = 2-dehydropantoate + (6S)-5,6,7,8-tetrahydrofolate. It functions in the pathway cofactor biosynthesis; (R)-pantothenate biosynthesis; (R)-pantoate from 3-methyl-2-oxobutanoate: step 1/2. Catalyzes the reversible reaction in which hydroxymethyl group from 5,10-methylenetetrahydrofolate is transferred onto alpha-ketoisovalerate to form ketopantoate. This is 3-methyl-2-oxobutanoate hydroxymethyltransferase from Aeromonas salmonicida (strain A449).